A 311-amino-acid polypeptide reads, in one-letter code: HPr kinase/phosphorylase (311 aa).

Active-site residues include histidine 138 and lysine 159. ATP is bound at residue 153-160 (GSSGIGKS). Mg(2+) is bound at residue serine 160. Catalysis depends on aspartate 177, which acts as the Proton acceptor; for phosphorylation activity. Proton donor; for dephosphorylation activity. Positions 201-210 (LEIRGVGIIN) are important for the catalytic mechanism of both phosphorylation and dephosphorylation. Position 202 (glutamate 202) interacts with Mg(2+). Arginine 243 is a catalytic residue. The segment at 264–269 (PVRPGR) is important for the catalytic mechanism of dephosphorylation.

Belongs to the HPrK/P family. In terms of assembly, homohexamer. It depends on Mg(2+) as a cofactor.

The enzyme catalyses [HPr protein]-L-serine + ATP = [HPr protein]-O-phospho-L-serine + ADP + H(+). It catalyses the reaction [HPr protein]-O-phospho-L-serine + phosphate + H(+) = [HPr protein]-L-serine + diphosphate. Catalyzes the ATP- as well as the pyrophosphate-dependent phosphorylation of a specific serine residue in HPr, a phosphocarrier protein of the phosphoenolpyruvate-dependent sugar phosphotransferase system (PTS). HprK/P also catalyzes the pyrophosphate-producing, inorganic phosphate-dependent dephosphorylation (phosphorolysis) of seryl-phosphorylated HPr (P-Ser-HPr). The two antagonistic activities of HprK/P are regulated by several intracellular metabolites, which change their concentration in response to the absence or presence of rapidly metabolisable carbon sources (glucose, fructose, etc.) in the growth medium. Therefore, by controlling the phosphorylation state of HPr, HPrK/P is a sensor enzyme that plays a major role in the regulation of carbon metabolism and sugar transport: it mediates carbon catabolite repression (CCR), and regulates PTS-catalyzed carbohydrate uptake and inducer exclusion. The sequence is that of HPr kinase/phosphorylase from Brevibacillus brevis (strain 47 / JCM 6285 / NBRC 100599).